The primary structure comprises 201 residues: Holliday junction resolvase RecU (201 aa).

Residues 1–26 (MAIGYPNGKKYAASQEELPQQKRKAP) form a disordered region. 4 residues coordinate Mg(2+): T87, D89, E102, and Q121.

The protein belongs to the RecU family. Mg(2+) is required as a cofactor.

It is found in the cytoplasm. It catalyses the reaction Endonucleolytic cleavage at a junction such as a reciprocal single-stranded crossover between two homologous DNA duplexes (Holliday junction).. Its function is as follows. Endonuclease that resolves Holliday junction intermediates in genetic recombination. Cleaves mobile four-strand junctions by introducing symmetrical nicks in paired strands. Promotes annealing of linear ssDNA with homologous dsDNA. Required for DNA repair, homologous recombination and chromosome segregation. In Listeria monocytogenes serotype 4a (strain HCC23), this protein is Holliday junction resolvase RecU.